Consider the following 181-residue polypeptide: ATP synthase subunit delta (181 aa).

The protein belongs to the ATPase delta chain family. As to quaternary structure, F-type ATPases have 2 components, F(1) - the catalytic core - and F(0) - the membrane proton channel. F(1) has five subunits: alpha(3), beta(3), gamma(1), delta(1), epsilon(1). F(0) has three main subunits: a(1), b(2) and c(10-14). The alpha and beta chains form an alternating ring which encloses part of the gamma chain. F(1) is attached to F(0) by a central stalk formed by the gamma and epsilon chains, while a peripheral stalk is formed by the delta and b chains.

Its subcellular location is the cell inner membrane. In terms of biological role, f(1)F(0) ATP synthase produces ATP from ADP in the presence of a proton or sodium gradient. F-type ATPases consist of two structural domains, F(1) containing the extramembraneous catalytic core and F(0) containing the membrane proton channel, linked together by a central stalk and a peripheral stalk. During catalysis, ATP synthesis in the catalytic domain of F(1) is coupled via a rotary mechanism of the central stalk subunits to proton translocation. This protein is part of the stalk that links CF(0) to CF(1). It either transmits conformational changes from CF(0) to CF(1) or is implicated in proton conduction. The chain is ATP synthase subunit delta from Desulfotalea psychrophila (strain LSv54 / DSM 12343).